The following is a 188-amino-acid chain: Adenine phosphoribosyltransferase (188 aa).

This sequence belongs to the purine/pyrimidine phosphoribosyltransferase family. Homodimer.

It localises to the cytoplasm. The catalysed reaction is AMP + diphosphate = 5-phospho-alpha-D-ribose 1-diphosphate + adenine. It participates in purine metabolism; AMP biosynthesis via salvage pathway; AMP from adenine: step 1/1. Functionally, catalyzes a salvage reaction resulting in the formation of AMP, that is energically less costly than de novo synthesis. The polypeptide is Adenine phosphoribosyltransferase (Frankia casuarinae (strain DSM 45818 / CECT 9043 / HFP020203 / CcI3)).